Consider the following 205-residue polypeptide: N-(5'-phosphoribosyl)anthranilate isomerase (205 aa).

Belongs to the TrpF family.

The enzyme catalyses N-(5-phospho-beta-D-ribosyl)anthranilate = 1-(2-carboxyphenylamino)-1-deoxy-D-ribulose 5-phosphate. It functions in the pathway amino-acid biosynthesis; L-tryptophan biosynthesis; L-tryptophan from chorismate: step 3/5. This Phocaeicola vulgatus (strain ATCC 8482 / DSM 1447 / JCM 5826 / CCUG 4940 / NBRC 14291 / NCTC 11154) (Bacteroides vulgatus) protein is N-(5'-phosphoribosyl)anthranilate isomerase.